Consider the following 168-residue polypeptide: Thiol peroxidase (168 aa).

The 150-residue stretch at Pro-19–Ala-168 folds into the Thioredoxin domain. Cys-61 serves as the catalytic Cysteine sulfenic acid (-SOH) intermediate. An intrachain disulfide couples Cys-61 to Cys-95.

This sequence belongs to the peroxiredoxin family. Tpx subfamily. Homodimer.

It carries out the reaction a hydroperoxide + [thioredoxin]-dithiol = an alcohol + [thioredoxin]-disulfide + H2O. Functionally, thiol-specific peroxidase that catalyzes the reduction of hydrogen peroxide and organic hydroperoxides to water and alcohols, respectively. Plays a role in cell protection against oxidative stress by detoxifying peroxides. This chain is Thiol peroxidase, found in Shigella dysenteriae.